Here is a 56-residue protein sequence, read N- to C-terminus: Large ribosomal subunit protein bL33 (56 aa).

The segment covering 1 to 12 (MATKGGRDKIKL) has biased composition (basic and acidic residues). Residues 1-24 (MATKGGRDKIKLESTAGTGHFYTT) form a disordered region. A compositionally biased stretch (polar residues) spans 15–24 (TAGTGHFYTT).

This sequence belongs to the bacterial ribosomal protein bL33 family.

The polypeptide is Large ribosomal subunit protein bL33 (Paracidovorax citrulli (strain AAC00-1) (Acidovorax citrulli)).